A 201-amino-acid polypeptide reads, in one-letter code: 3-isopropylmalate dehydratase small subunit (201 aa).

Belongs to the LeuD family. LeuD type 1 subfamily. As to quaternary structure, heterodimer of LeuC and LeuD.

The enzyme catalyses (2R,3S)-3-isopropylmalate = (2S)-2-isopropylmalate. It participates in amino-acid biosynthesis; L-leucine biosynthesis; L-leucine from 3-methyl-2-oxobutanoate: step 2/4. Functionally, catalyzes the isomerization between 2-isopropylmalate and 3-isopropylmalate, via the formation of 2-isopropylmaleate. The chain is 3-isopropylmalate dehydratase small subunit from Parvibaculum lavamentivorans (strain DS-1 / DSM 13023 / NCIMB 13966).